A 308-amino-acid polypeptide reads, in one-letter code: tRNA dimethylallyltransferase (308 aa).

Position 17-24 (17-24 (GPTGSGKS)) interacts with ATP. 19–24 (TGSGKS) contributes to the substrate binding site.

The protein belongs to the IPP transferase family. As to quaternary structure, monomer. Mg(2+) serves as cofactor.

It carries out the reaction adenosine(37) in tRNA + dimethylallyl diphosphate = N(6)-dimethylallyladenosine(37) in tRNA + diphosphate. Catalyzes the transfer of a dimethylallyl group onto the adenine at position 37 in tRNAs that read codons beginning with uridine, leading to the formation of N6-(dimethylallyl)adenosine (i(6)A). The sequence is that of tRNA dimethylallyltransferase from Paenarthrobacter aurescens (strain TC1).